We begin with the raw amino-acid sequence, 330 residues long: Ketol-acid reductoisomerase (NADP(+)) (330 aa).

The 180-residue stretch at 2–181 (AKVYYDNDVN…GATRAGVIET (180 aa)) folds into the KARI N-terminal Rossmann domain. NADP(+) contacts are provided by residues 25 to 28 (YGSQ), Arg48, Ser52, and 82 to 85 (DEVQ). The active site involves His107. NADP(+) is bound at residue Gly133. A KARI C-terminal knotted domain is found at 182–327 (TFKEETETDL…ADLRMMMPFI (146 aa)). Residues Asp190, Glu194, Glu226, and Glu230 each coordinate Mg(2+). Ser251 is a substrate binding site.

Belongs to the ketol-acid reductoisomerase family. Mg(2+) is required as a cofactor.

It carries out the reaction (2R)-2,3-dihydroxy-3-methylbutanoate + NADP(+) = (2S)-2-acetolactate + NADPH + H(+). The catalysed reaction is (2R,3R)-2,3-dihydroxy-3-methylpentanoate + NADP(+) = (S)-2-ethyl-2-hydroxy-3-oxobutanoate + NADPH + H(+). Its pathway is amino-acid biosynthesis; L-isoleucine biosynthesis; L-isoleucine from 2-oxobutanoate: step 2/4. The protein operates within amino-acid biosynthesis; L-valine biosynthesis; L-valine from pyruvate: step 2/4. Functionally, involved in the biosynthesis of branched-chain amino acids (BCAA). Catalyzes an alkyl-migration followed by a ketol-acid reduction of (S)-2-acetolactate (S2AL) to yield (R)-2,3-dihydroxy-isovalerate. In the isomerase reaction, S2AL is rearranged via a Mg-dependent methyl migration to produce 3-hydroxy-3-methyl-2-ketobutyrate (HMKB). In the reductase reaction, this 2-ketoacid undergoes a metal-dependent reduction by NADPH to yield (R)-2,3-dihydroxy-isovalerate. The chain is Ketol-acid reductoisomerase (NADP(+)) from Macrococcus caseolyticus (strain JCSC5402) (Macrococcoides caseolyticum).